The chain runs to 462 residues: MQLLNIYNTLAREKQPFVPIEPGKVRMYVCGMTVYDYCHVGHARVMVVFDMVHRWLRAAGYEVTYVQNITDIDDKIIRRAAENGETIGELTTRFIQYMHEDAAALGVIRPDHEPRATDYVPQMLDMIGKLEAKGLAYQASDGDVNYSVRKFAGYGKLSGKSLEDLRAGERVSANDAKQDPLDFVLWKSAKASEPPESKWDSKWGAGRPGWHIECSAMSCTLLGEHFDIHGGGADLQFPHHENEIAQSEGASGKPFVNMWMHNGFVRINDEKMSKSLGNFFTIREVLKSYDAEVVRFFILRAHYRSPLNYSDAHLDDARHALTRLYTALKDSQPGGCAVDWDEPHARRFAEAMGDDFNTPIAMSVLFDLASEINRTGSTAAARQLKGLAGTLGLLERDPHTFLQGGRSDDGISPEQIETLIAARKTAKVERNFAEADRIRAQLLEAGIVLEDKPGGATEWRRA.

Cys-30 provides a ligand contact to Zn(2+). Positions 32–42 (MTVYDYCHVGH) match the 'HIGH' region motif. Zn(2+) contacts are provided by Cys-214, His-239, and Glu-243. A 'KMSKS' region motif is present at residues 271 to 275 (KMSKS). Lys-274 contacts ATP.

This sequence belongs to the class-I aminoacyl-tRNA synthetase family. As to quaternary structure, monomer. Requires Zn(2+) as cofactor.

It localises to the cytoplasm. The enzyme catalyses tRNA(Cys) + L-cysteine + ATP = L-cysteinyl-tRNA(Cys) + AMP + diphosphate. The protein is Cysteine--tRNA ligase of Cupriavidus necator (strain ATCC 17699 / DSM 428 / KCTC 22496 / NCIMB 10442 / H16 / Stanier 337) (Ralstonia eutropha).